The sequence spans 461 residues: MSPILTNRQAEELHKSIIAYLTANNLLDTANTLRAELNLNEDAFDPATAKKYETLLEKKWTSVVRLQKKIMDLESRMSAMQAELDNATPTSLSKRNKDPASWIPTAPARHALESHRDTINSVAFHPIFSSVASASDDCTIKIWDWELGELERTIKGHTRAVVDVDFGGPRGGILLASCSSDLSIKLWDPSNEYKNIRTLVGHDHSVSAVRFIPLGASGAPSSGNLLASASRDKSLKIWDANTGYCLRTLQGHTAWVRDVFPSPDGRFLLSTGDDSTARLWDISVSNPETKVTMFGHDHFNECCAIAPSTSYQYLSPLTGLKKPPPASSTAEFMATGSRDKKIKIWDARGTCLLTLAGHDNWIRALAFHPGGKYLFSVSDDRTLRCWDLSQEGKCIKVMRDAHERFITCLRWAPSIFKDAPTGNGASDGKNGDIKKSDSPEVQIRCVIATGGVDMKLRIFAN.

A LisH domain is found at 9 to 41 (QAEELHKSIIAYLTANNLLDTANTLRAELNLNE). Positions 61 to 88 (TSVVRLQKKIMDLESRMSAMQAELDNAT) form a coiled coil. WD repeat units follow at residues 114–155 (SHRD…RTIK), 157–197 (HTRA…KNIR), 201–248 (GHDH…CLRT), 251–290 (GHTA…PETK), 312–355 (QYLS…LLTL), 357–396 (GHDN…KCIK), 401–446 (AHER…IRCV), and 448–461 (ATGG…IFAN).

It belongs to the WD repeat LIS1/nudF family. Self-associates. Interacts with NDL1 and dynein.

The protein resides in the cytoplasm. The protein localises to the cytoskeleton. It is found in the spindle pole. Positively regulates the activity of the minus-end directed microtubule motor protein dynein. May enhance dynein-mediated microtubule sliding by targeting dynein to the microtubule plus end. Required for nuclear migration during vegetative growth as well as development. Required for retrograde early endosome (EE) transport from the hyphal tip. Required for localization of dynein to the mitotic spindle poles. Recruits additional proteins to the dynein complex at SPBs. The protein is Nuclear distribution protein PAC1 of Arthroderma benhamiae (strain ATCC MYA-4681 / CBS 112371) (Trichophyton mentagrophytes).